The following is a 358-amino-acid chain: Isopentenyl-diphosphate delta-isomerase (358 aa).

12-13 (RK) is a binding site for substrate. Residues 69-71 (AMT), S99, and N128 each bind FMN. Position 158 (Q158) interacts with substrate. A Mg(2+)-binding site is contributed by E159. Residues K190, T220, 267 to 269 (GIR), and 288 to 289 (AG) each bind FMN.

The protein belongs to the IPP isomerase type 2 family. In terms of assembly, homooctamer. Dimer of tetramers. It depends on FMN as a cofactor. NADPH is required as a cofactor. Mg(2+) serves as cofactor.

The protein localises to the cytoplasm. The catalysed reaction is isopentenyl diphosphate = dimethylallyl diphosphate. Involved in the biosynthesis of isoprenoids. Catalyzes the 1,3-allylic rearrangement of the homoallylic substrate isopentenyl (IPP) to its allylic isomer, dimethylallyl diphosphate (DMAPP). This is Isopentenyl-diphosphate delta-isomerase from Listeria innocua serovar 6a (strain ATCC BAA-680 / CLIP 11262).